The chain runs to 146 residues: Hemoglobin subunit beta (146 aa).

Valine 1 is modified (N-acetylvaline). One can recognise a Globin domain in the interval 2 to 146 (HLTADEKAAV…VATALAHKYH (145 aa)). A Phosphoserine modification is found at serine 44. Lysine 59 is subject to N6-acetyllysine. Histidine 63 contacts heme b. Residue lysine 82 is modified to N6-acetyllysine. Histidine 92 serves as a coordination point for heme b. Cysteine 93 carries the S-nitrosocysteine modification. Residue lysine 144 is modified to N6-acetyllysine.

Belongs to the globin family. Heterotetramer of two alpha chains and two beta chains. As to expression, red blood cells.

Functionally, involved in oxygen transport from the lung to the various peripheral tissues. This is Hemoglobin subunit beta (HBB) from Myotis velifer (Mouse-eared bat).